The chain runs to 187 residues: Elongation factor P (187 aa).

It belongs to the elongation factor P family.

It localises to the cytoplasm. The protein operates within protein biosynthesis; polypeptide chain elongation. Functionally, involved in peptide bond synthesis. Stimulates efficient translation and peptide-bond synthesis on native or reconstituted 70S ribosomes in vitro. Probably functions indirectly by altering the affinity of the ribosome for aminoacyl-tRNA, thus increasing their reactivity as acceptors for peptidyl transferase. The polypeptide is Elongation factor P (Ruegeria pomeroyi (strain ATCC 700808 / DSM 15171 / DSS-3) (Silicibacter pomeroyi)).